The following is a 305-amino-acid chain: UDP-3-O-acyl-N-acetylglucosamine deacetylase (305 aa).

Residues His79, His238, and Asp242 each coordinate Zn(2+). Catalysis depends on His265, which acts as the Proton donor.

Belongs to the LpxC family. It depends on Zn(2+) as a cofactor.

It carries out the reaction a UDP-3-O-[(3R)-3-hydroxyacyl]-N-acetyl-alpha-D-glucosamine + H2O = a UDP-3-O-[(3R)-3-hydroxyacyl]-alpha-D-glucosamine + acetate. Its pathway is glycolipid biosynthesis; lipid IV(A) biosynthesis; lipid IV(A) from (3R)-3-hydroxytetradecanoyl-[acyl-carrier-protein] and UDP-N-acetyl-alpha-D-glucosamine: step 2/6. Functionally, catalyzes the hydrolysis of UDP-3-O-myristoyl-N-acetylglucosamine to form UDP-3-O-myristoylglucosamine and acetate, the committed step in lipid A biosynthesis. The sequence is that of UDP-3-O-acyl-N-acetylglucosamine deacetylase from Sodalis glossinidius (strain morsitans).